The following is a 146-amino-acid chain: MKVYVDADACPVKDIIIKESGKQNIAVTLVTSLSHYSLHEHPSHVETIYVDTGADAADYRIMQLANKGDIIVTQDYGLASLALAKGCYVLHHKGFAYTNHNIDQLLQSRYLSAKERKSGKRTKGPKALTEEDRINFNQLFLQYITK.

It belongs to the UPF0178 family.

The sequence is that of UPF0178 protein OB0454 from Oceanobacillus iheyensis (strain DSM 14371 / CIP 107618 / JCM 11309 / KCTC 3954 / HTE831).